Consider the following 291-residue polypeptide: 3-hydroxy-5-phosphonooxypentane-2,4-dione thiolase (291 aa).

The active-site Schiff-base intermediate with substrate is the K203.

This sequence belongs to the DeoC/FbaB aldolase family. Homodecamer.

It localises to the cytoplasm. It carries out the reaction dihydroxyacetone phosphate + acetyl-CoA = 3-hydroxy-2,4-dioxopentyl phosphate + CoA. In terms of biological role, involved in the degradation of phospho-AI-2, thereby terminating induction of the lsr operon and closing the AI-2 signaling cycle. Catalyzes the transfer of an acetyl moiety from 3-hydroxy-5-phosphonooxypentane-2,4-dione to CoA to form glycerone phosphate and acetyl-CoA. The sequence is that of 3-hydroxy-5-phosphonooxypentane-2,4-dione thiolase from Salmonella paratyphi A (strain ATCC 9150 / SARB42).